Reading from the N-terminus, the 326-residue chain is Myeloid protein 1 (326 aa).

Residues 1–18 (MPALSLIALLSLVSTAFA) form the signal peptide. Repeat copies occupy residues 28 to 162 (QQGR…SDPT) and 177 to 312 (QQDA…SDPT). 3 disulfides stabilise this stretch: Cys-37–Cys-74, Cys-48–Cys-53, and Cys-113–Cys-156. Zn(2+) contacts are provided by His-67, Asp-71, and His-152. Residues 307-326 (DRSDPTSNLERGKGESEMEV) form a disordered region.

It belongs to the LECT2/MIM-1 family. Post-translationally, substrate for arginine-specific ADP-ribosyltransferase.

Its subcellular location is the cytoplasmic granule. The protein is Myeloid protein 1 (MIM1) of Gallus gallus (Chicken).